Consider the following 110-residue polypeptide: uncharacterized protein (110 aa).

2 disordered regions span residues 1-42 (MEWG…RAQQ) and 66-110 (RQLG…AAEP). Residues 36–68 (REERAQQLLDAVEQRQRQLLDTIAACEEMLRQL) adopt a coiled-coil conformation.

This is an uncharacterized protein from Homo sapiens (Human).